Here is a 123-residue protein sequence, read N- to C-terminus: Large ribosomal subunit protein uL14 (123 aa).

The protein belongs to the universal ribosomal protein uL14 family. As to quaternary structure, part of the 50S ribosomal subunit. Forms a cluster with proteins L3 and L19. In the 70S ribosome, L14 and L19 interact and together make contacts with the 16S rRNA in bridges B5 and B8.

Binds to 23S rRNA. Forms part of two intersubunit bridges in the 70S ribosome. The protein is Large ribosomal subunit protein uL14 of Vibrio parahaemolyticus serotype O3:K6 (strain RIMD 2210633).